We begin with the raw amino-acid sequence, 162 residues long: Putative 4-hydroxy-4-methyl-2-oxoglutarate aldolase (162 aa).

Residues 75–78 (GDML) and R97 contribute to the substrate site. D98 is an a divalent metal cation binding site.

This sequence belongs to the class II aldolase/RraA-like family. Homotrimer. The cofactor is a divalent metal cation.

The catalysed reaction is 4-hydroxy-4-methyl-2-oxoglutarate = 2 pyruvate. The enzyme catalyses oxaloacetate + H(+) = pyruvate + CO2. Functionally, catalyzes the aldol cleavage of 4-hydroxy-4-methyl-2-oxoglutarate (HMG) into 2 molecules of pyruvate. Also contains a secondary oxaloacetate (OAA) decarboxylase activity due to the common pyruvate enolate transition state formed following C-C bond cleavage in the retro-aldol and decarboxylation reactions. The protein is Putative 4-hydroxy-4-methyl-2-oxoglutarate aldolase of Pseudomonas paraeruginosa (strain DSM 24068 / PA7) (Pseudomonas aeruginosa (strain PA7)).